Here is a 66-residue protein sequence, read N- to C-terminus: U1-theraphotoxin-Cg1a 1 (66 aa).

An N-terminal signal peptide occupies residues 1-21 (MKTSALFVIFGLVLLFCNSFA). Residues 22-29 (AELKTTGR) constitute a propeptide that is removed on maturation. 3 cysteine pairs are disulfide-bonded: Cys31–Cys46, Cys38–Cys51, and Cys45–Cys58. Proline amide is present on Pro63.

Belongs to the neurotoxin 10 (Hwtx-1) family. 46 (Jztx-7/10/12) subfamily. As to expression, expressed by the venom gland.

It localises to the secreted. Its function is as follows. Probable ion channel inhibitor. The chain is U1-theraphotoxin-Cg1a 1 from Chilobrachys guangxiensis (Chinese earth tiger tarantula).